We begin with the raw amino-acid sequence, 414 residues long: Gamma-glutamyl phosphate reductase (414 aa).

Belongs to the gamma-glutamyl phosphate reductase family.

The protein localises to the cytoplasm. It carries out the reaction L-glutamate 5-semialdehyde + phosphate + NADP(+) = L-glutamyl 5-phosphate + NADPH + H(+). It functions in the pathway amino-acid biosynthesis; L-proline biosynthesis; L-glutamate 5-semialdehyde from L-glutamate: step 2/2. Functionally, catalyzes the NADPH-dependent reduction of L-glutamate 5-phosphate into L-glutamate 5-semialdehyde and phosphate. The product spontaneously undergoes cyclization to form 1-pyrroline-5-carboxylate. This Thermoanaerobacter pseudethanolicus (strain ATCC 33223 / 39E) (Clostridium thermohydrosulfuricum) protein is Gamma-glutamyl phosphate reductase.